Consider the following 186-residue polypeptide: Ribosome-recycling factor (186 aa).

This sequence belongs to the RRF family.

Its subcellular location is the cytoplasm. Functionally, responsible for the release of ribosomes from messenger RNA at the termination of protein biosynthesis. May increase the efficiency of translation by recycling ribosomes from one round of translation to another. This is Ribosome-recycling factor from Burkholderia lata (strain ATCC 17760 / DSM 23089 / LMG 22485 / NCIMB 9086 / R18194 / 383).